Consider the following 491-residue polypeptide: tRNA-2-methylthio-N(6)-dimethylallyladenosine synthase (491 aa).

An MTTase N-terminal domain is found at 3 to 119 (RSYQIRTYGC…LPTLLERARH (117 aa)). Positions 12, 48, 82, 156, 160, and 163 each coordinate [4Fe-4S] cluster. The region spanning 142-372 (RESAYSGWVS…IELQNQISWD (231 aa)) is the Radical SAM core domain. The TRAM domain maps to 375-446 (KELVGRSVEL…PHHLVADSEI (72 aa)).

This sequence belongs to the methylthiotransferase family. MiaB subfamily. In terms of assembly, monomer. The cofactor is [4Fe-4S] cluster.

It localises to the cytoplasm. It carries out the reaction N(6)-dimethylallyladenosine(37) in tRNA + (sulfur carrier)-SH + AH2 + 2 S-adenosyl-L-methionine = 2-methylsulfanyl-N(6)-dimethylallyladenosine(37) in tRNA + (sulfur carrier)-H + 5'-deoxyadenosine + L-methionine + A + S-adenosyl-L-homocysteine + 2 H(+). Its function is as follows. Catalyzes the methylthiolation of N6-(dimethylallyl)adenosine (i(6)A), leading to the formation of 2-methylthio-N6-(dimethylallyl)adenosine (ms(2)i(6)A) at position 37 in tRNAs that read codons beginning with uridine. The sequence is that of tRNA-2-methylthio-N(6)-dimethylallyladenosine synthase from Saccharopolyspora erythraea (strain ATCC 11635 / DSM 40517 / JCM 4748 / NBRC 13426 / NCIMB 8594 / NRRL 2338).